Reading from the N-terminus, the 114-residue chain is Cyclin-dependent kinase 2-associated protein 1 (114 aa).

The disordered stretch occupies residues 18–57; the sequence is AGSVHSPSTSMATSSQYRQLLSDYGPPSLGYTQGTGNSQV. Residues 19 to 24 form an interaction with CDK2AP2 region; it reads GSVHSP. A compositionally biased stretch (polar residues) spans 20-36; that stretch reads SVHSPSTSMATSSQYRQ. Serine 45 is modified (phosphoserine; by IKKE). Polar residues predominate over residues 47 to 57; it reads GYTQGTGNSQV.

Belongs to the CDK2AP family. In terms of assembly, homodimer. Component of the nucleosome remodeling and deacetylase (NuRD) repressor complex, composed of core proteins MTA1, MTA2, MTA3, RBBP4, RBBP7, HDAC1, HDAC2, MBD2, MBD3, and peripherally associated proteins CDK2AP1, CDK2AP2, GATAD2A, GATAD2B, CHD3, CHD4 and CHD5. The exact stoichiometry of the NuRD complex is unknown, and some subunits such as MBD2 and MBD3, GATAD2A and GATAD2B, and CHD3, CHD4 and CHD5 define mutually exclusive NuRD complexes. Interacts with monomeric unphosphorylated CDK2. Interacts with CDK2AP2. Interacts with GATAD2A. Interacts with HDAC1. Interacts with HDAC2. Interacts with MBD2. Interacts with MBD3. Interacts with RBBP4. Interacts with RBBP7. Post-translationally, phosphorylated in vitro by IKBKE at Ser-45.

The protein localises to the nucleus. It is found in the chromosome. Functionally, inhibitor of cyclin-dependent kinase CDK2. Also acts as a component of the histone deacetylase NuRD complex which participates in the remodeling of chromatin. In Mus musculus (Mouse), this protein is Cyclin-dependent kinase 2-associated protein 1 (Cdk2ap1).